Here is a 118-residue protein sequence, read N- to C-terminus: Phosphoribosyl-AMP cyclohydrolase (118 aa).

D85 serves as a coordination point for Mg(2+). C86 lines the Zn(2+) pocket. The Mg(2+) site is built by D87 and D89. Zn(2+) contacts are provided by C102 and C109.

Belongs to the PRA-CH family. Homodimer. The cofactor is Mg(2+). It depends on Zn(2+) as a cofactor.

Its subcellular location is the cytoplasm. It catalyses the reaction 1-(5-phospho-beta-D-ribosyl)-5'-AMP + H2O = 1-(5-phospho-beta-D-ribosyl)-5-[(5-phospho-beta-D-ribosylamino)methylideneamino]imidazole-4-carboxamide. It participates in amino-acid biosynthesis; L-histidine biosynthesis; L-histidine from 5-phospho-alpha-D-ribose 1-diphosphate: step 3/9. In terms of biological role, catalyzes the hydrolysis of the adenine ring of phosphoribosyl-AMP. The protein is Phosphoribosyl-AMP cyclohydrolase of Sulfurisphaera tokodaii (strain DSM 16993 / JCM 10545 / NBRC 100140 / 7) (Sulfolobus tokodaii).